Here is a 200-residue protein sequence, read N- to C-terminus: Dephospho-CoA kinase (200 aa).

The 199-residue stretch at 2–200 (LIAVVGKAGV…CHHGHYQTPK (199 aa)) folds into the DPCK domain. An ATP-binding site is contributed by 10–15 (GVGKTT).

This sequence belongs to the CoaE family.

The protein localises to the cytoplasm. It carries out the reaction 3'-dephospho-CoA + ATP = ADP + CoA + H(+). The protein operates within cofactor biosynthesis; coenzyme A biosynthesis; CoA from (R)-pantothenate: step 5/5. Catalyzes the phosphorylation of the 3'-hydroxyl group of dephosphocoenzyme A to form coenzyme A. The protein is Dephospho-CoA kinase of Mycoplasma pneumoniae (strain ATCC 29342 / M129 / Subtype 1) (Mycoplasmoides pneumoniae).